Consider the following 963-residue polypeptide: Protein NLP2 (963 aa).

The region spanning 635–716 (RRPGEKRRTK…IDSVQGVQGS (82 aa)) is the RWP-RK domain. Residues 734 to 755 (MSGTGTSFKNPNAQTENGVSAQ) show a composition bias toward polar residues. The interval 734 to 794 (MSGTGTSFKN…QSTNTGTTSN (61 aa)) is disordered. Residues 756–794 (GTAAAPKSPPSSSCSHSSGSSTCCSTGANQSTNTGTTSN) are compositionally biased toward low complexity. The PB1 domain occupies 862 to 945 (ASKVKATFGE…RTIKISVHEA (84 aa)).

It is found in the nucleus. Its function is as follows. Probable transcription factor. The chain is Protein NLP2 (NLP2) from Arabidopsis thaliana (Mouse-ear cress).